We begin with the raw amino-acid sequence, 195 residues long: dCTP deaminase (195 aa).

Residues 110–115 (RSSLAR), aspartate 128, 136–138 (VLE), tyrosine 171, lysine 178, and glutamine 182 contribute to the dCTP site. Catalysis depends on glutamate 138, which acts as the Proton donor/acceptor.

Belongs to the dCTP deaminase family. Homotrimer.

The enzyme catalyses dCTP + H2O + H(+) = dUTP + NH4(+). Its pathway is pyrimidine metabolism; dUMP biosynthesis; dUMP from dCTP (dUTP route): step 1/2. In terms of biological role, catalyzes the deamination of dCTP to dUTP. The polypeptide is dCTP deaminase (Idiomarina loihiensis (strain ATCC BAA-735 / DSM 15497 / L2-TR)).